The primary structure comprises 142 residues: Large ribosomal subunit protein uL13 (142 aa).

Belongs to the universal ribosomal protein uL13 family. In terms of assembly, part of the 50S ribosomal subunit.

This protein is one of the early assembly proteins of the 50S ribosomal subunit, although it is not seen to bind rRNA by itself. It is important during the early stages of 50S assembly. This is Large ribosomal subunit protein uL13 from Hamiltonella defensa subsp. Acyrthosiphon pisum (strain 5AT).